Reading from the N-terminus, the 338-residue chain is Putative peptide import ATP-binding protein BMEII0863 (338 aa).

The region spanning 10-263 (KGLRTVFRTR…PRHPYTMGLL (254 aa)) is the ABC transporter domain. 43–50 (GESGSGKS) is a binding site for ATP.

It belongs to the ABC transporter superfamily. The complex is composed of two ATP-binding proteins (BMEII0863 and BMEII0864), two transmembrane proteins (BMEII0860 and BMEII0861) and a solute-binding protein (BMEII0859).

It is found in the cell inner membrane. Its function is as follows. Probably part of an ABC transporter complex that could be involved in peptide import. Probably responsible for energy coupling to the transport system. The sequence is that of Putative peptide import ATP-binding protein BMEII0863 from Brucella melitensis biotype 1 (strain ATCC 23456 / CCUG 17765 / NCTC 10094 / 16M).